The primary structure comprises 104 residues: Large ribosomal subunit protein uL23 (104 aa).

The protein belongs to the universal ribosomal protein uL23 family. Part of the 50S ribosomal subunit. Contacts protein L29, and trigger factor when it is bound to the ribosome.

In terms of biological role, one of the early assembly proteins it binds 23S rRNA. One of the proteins that surrounds the polypeptide exit tunnel on the outside of the ribosome. Forms the main docking site for trigger factor binding to the ribosome. This is Large ribosomal subunit protein uL23 from Ralstonia nicotianae (strain ATCC BAA-1114 / GMI1000) (Ralstonia solanacearum).